A 376-amino-acid chain; its full sequence is Thymidine kinase (376 aa).

The interval 1–39 (MASYPCHQHASAFDQAARSRGHSNRRTALRPRRQQEATE) is disordered. A compositionally biased stretch (basic residues) spans 19–32 (SRGHSNRRTALRPR). An ATP-binding site is contributed by 56-63 (GPHGMGKT). Glu-83 functions as the Proton acceptor in the catalytic mechanism. Positions 101 and 125 each coordinate substrate. Arg-216 is an ATP binding site. Residue Arg-222 coordinates substrate. Residues 260 to 280 (GQLSGTAVPPQGAEPQSNAGP) are disordered.

This sequence belongs to the herpesviridae thymidine kinase family. In terms of assembly, homodimer.

The catalysed reaction is thymidine + ATP = dTMP + ADP + H(+). Catalyzes the transfer of the gamma-phospho group of ATP to thymidine to generate dTMP in the salvage pathway of pyrimidine synthesis. The dTMP serves as a substrate for DNA polymerase during viral DNA replication. Allows the virus to be reactivated and to grow in non-proliferative cells lacking a high concentration of phosphorylated nucleic acid precursors. The protein is Thymidine kinase of Homo sapiens (Human).